Here is a 308-residue protein sequence, read N- to C-terminus: HPr kinase/phosphorylase (308 aa).

Residues H141 and K162 contribute to the active site. ATP is bound at residue 156 to 163; that stretch reads GKSGVGKS. S163 contributes to the Mg(2+) binding site. The Proton acceptor; for phosphorylation activity. Proton donor; for dephosphorylation activity role is filled by D180. The interval 204–213 is important for the catalytic mechanism of both phosphorylation and dephosphorylation; it reads MEIRGVGILD. E205 serves as a coordination point for Mg(2+). R246 is an active-site residue. An important for the catalytic mechanism of dephosphorylation region spans residues 267–272; the sequence is PVKPGR.

It belongs to the HPrK/P family. In terms of assembly, homohexamer. Mg(2+) serves as cofactor.

It catalyses the reaction [HPr protein]-L-serine + ATP = [HPr protein]-O-phospho-L-serine + ADP + H(+). It carries out the reaction [HPr protein]-O-phospho-L-serine + phosphate + H(+) = [HPr protein]-L-serine + diphosphate. Catalyzes the ATP- as well as the pyrophosphate-dependent phosphorylation of a specific serine residue in HPr, a phosphocarrier protein of the phosphoenolpyruvate-dependent sugar phosphotransferase system (PTS). HprK/P also catalyzes the pyrophosphate-producing, inorganic phosphate-dependent dephosphorylation (phosphorolysis) of seryl-phosphorylated HPr (P-Ser-HPr). The two antagonistic activities of HprK/P are regulated by several intracellular metabolites, which change their concentration in response to the absence or presence of rapidly metabolisable carbon sources (glucose, fructose, etc.) in the growth medium. Therefore, by controlling the phosphorylation state of HPr, HPrK/P is a sensor enzyme that plays a major role in the regulation of carbon metabolism and sugar transport: it mediates carbon catabolite repression (CCR), and regulates PTS-catalyzed carbohydrate uptake and inducer exclusion. The protein is HPr kinase/phosphorylase of Peptoclostridium acidaminophilum (Eubacterium acidaminophilum).